We begin with the raw amino-acid sequence, 314 residues long: Probable cell division protein WhiA (314 aa).

The H-T-H motif DNA-binding region spans 277 to 311 (TLKELGEKMPSGAISKSGINHRLRKLNQLAEGYQQ).

This sequence belongs to the WhiA family.

Functionally, involved in cell division and chromosome segregation. The polypeptide is Probable cell division protein WhiA (Latilactobacillus sakei subsp. sakei (strain 23K) (Lactobacillus sakei subsp. sakei)).